Here is a 1101-residue protein sequence, read N- to C-terminus: Selenocysteine insertion sequence-binding protein 2-like (1101 aa).

Disordered stretches follow at residues 154–206 (LGQV…AGPD), 240–295 (LWKS…PDSG), 320–387 (QKKP…SESL), 884–1010 (TSDG…ISVE), and 1030–1101 (TLQL…TQTT). Positions 255-265 (AESSSEQGASE) are enriched in low complexity. A Phosphoserine modification is found at Ser-276. A compositionally biased stretch (polar residues) spans 327-346 (KNQTFSRGGRQTEQRNNSQV). 2 stretches are compositionally biased toward basic and acidic residues: residues 356-371 (SSERRQNLQKRPDNKH) and 892-908 (ENEKEVSCKHSTSEKPS). Residues 925 to 939 (ATGSTTSATSAGKST) show a composition bias toward low complexity. The segment covering 940–950 (ASDKEEVKPDD) has biased composition (basic and acidic residues). Over residues 954–964 (ASQQSTETGSL) the composition is skewed to polar residues. The segment covering 988 to 1002 (LEEEEDEDEEEEEDY) has biased composition (acidic residues). Residues 1030–1039 (TLQLGKTLNG) show a composition bias toward polar residues. Positions 1040 to 1057 (SEEDNVEQSGEEEAEAPE) are enriched in acidic residues. Over residues 1070-1087 (ADQQASPGQQKSSNCSSL) the composition is skewed to polar residues.

Functionally, binds SECIS (Sec insertion sequence) elements present on selenocysteine (Sec) protein mRNAs, but does not promote Sec incorporation into selenoproteins in vitro. This chain is Selenocysteine insertion sequence-binding protein 2-like (SECISBP2L), found in Homo sapiens (Human).